Here is a 228-residue protein sequence, read N- to C-terminus: Cytokinin riboside 5'-monophosphate phosphoribohydrolase LOG5 (228 aa).

Residues Glu-79, 97–98 (RK), and 114–120 (GYGTLEE) each bind substrate.

The protein belongs to the LOG family. As to expression, expressed in roots and shoots. Detected in vascular tissues of roots, cotyledons, and leaves, axillary buds, immature and mature flowers, fruit abscission zones and ovules.

It is found in the cytoplasm. It localises to the nucleus. It carries out the reaction N(6)-(dimethylallyl)adenosine 5'-phosphate + H2O = N(6)-dimethylallyladenine + D-ribose 5-phosphate. The catalysed reaction is 9-ribosyl-trans-zeatin 5'-phosphate + H2O = trans-zeatin + D-ribose 5-phosphate. In terms of biological role, cytokinin-activating enzyme working in the direct activation pathway. Phosphoribohydrolase that converts inactive cytokinin nucleotides to the biologically active free-base forms. This Arabidopsis thaliana (Mouse-ear cress) protein is Cytokinin riboside 5'-monophosphate phosphoribohydrolase LOG5 (LOG5).